A 507-amino-acid chain; its full sequence is MLHNYDDFGGGKMQGAPQVPRNTLLSVDQQLQLMNTINNMVRASQFTSQLANTIFTLCAQLKTSGSMLEQSHKNELNKVFTSLRQACCRDNGQLGTPCRLKIMELVELRAMNWRTNLAHSQYYVNRPEGQHDPAPTVGIPPSATSPPTQVTSSVTSPVPSSPQPPMQFVPQNPMMFQDPMAANHNAGGIFFIPAASTWMNPLMPMPPNPFLPHSMIPPDHQMFLRQRSLNKKPNNLMNKTLQLRHEMIIRNSDSGKIMGVKGRRVAAVEQLTNTVISFQKVDSKSKERTLTITASTMEDIERAKDMIIDTIRRNMSPMRTDMSIPPPNQYSGMSSENQSIPSQQNTANIDEDDDDDDEDIKLEQTSDGKLTFHCDDPELLAAAQEALSAYLRVRARPSAEEREKKKERRKSMPLQQTARDQQEPVMLKPAKTFHGSTPNLADGLAATTTVVVASIPQPMVPNVHASGDNPIRYNRDTLMTARDTKRAPIPDEMLQEINRVAPDILIA.

Positions 126-163 are disordered; it reads RPEGQHDPAPTVGIPPSATSPPTQVTSSVTSPVPSSPQ. Positions 140–158 are enriched in low complexity; sequence PPSATSPPTQVTSSVTSPV. The region spanning 242-307 is the KH domain; the sequence is QLRHEMIIRN…EDIERAKDMI (66 aa). Disordered stretches follow at residues 314–360 and 395–424; these read NMSP…DEDI and ARPS…QQEP. Residues 329-348 are compositionally biased toward polar residues; sequence QYSGMSSENQSIPSQQNTAN. The segment covering 349-360 has biased composition (acidic residues); that stretch reads IDEDDDDDDEDI.

As to quaternary structure, interacts with eukaryotic translation initiation factor ife-3.

Its subcellular location is the cytoplasm. Its function is as follows. Plays a role in promoting translation. This chain is Eukaryotic translation initiation factor 4E-binding protein Mextli homolog, found in Caenorhabditis elegans.